A 784-amino-acid polypeptide reads, in one-letter code: Replication protein A 70 kDa DNA-binding subunit E (784 aa).

The disordered stretch occupies residues 114–224; the sequence is HPVPGGKHND…NRGPVARNEA (111 aa). 2 stretches are compositionally biased toward polar residues: residues 132–148 and 167–190; these read KFNT…QVNN and SSVP…NGVT. A DNA-binding region (OB) is located at residues 241 to 327; the sequence is WTIKARVTNK…RNDYEIMLDN (87 aa). Residues 532–558 form a C4-type zinc finger; it reads CPIMNGDRPCSKKVTDNGDGTWRCEKC. Disordered stretches follow at residues 678-707 and 746-784; these read LPIN…PSSV and AKCP…VGSY. The span at 695-707 shows a compositional bias: polar residues; that stretch reads GIGSSGTRDPSSV. Over residues 760-776 the composition is skewed to gly residues; it reads YMGGSYRGTTGSYGGGL.

Belongs to the replication factor A protein 1 family. Heterotrimer of RPA1, RPA2 and RPA3 (canonical replication protein A complex).

It localises to the nucleus. In terms of biological role, component of the replication protein A complex (RPA) required for DNA recombination, repair and replication. The activity of RPA is mediated by single-stranded DNA binding and protein interactions. Probably involved in repair of double-strand DNA breaks (DSBs) induced by genotoxic stresses. This is Replication protein A 70 kDa DNA-binding subunit E (RPA1E) from Arabidopsis thaliana (Mouse-ear cress).